The following is a 602-amino-acid chain: Multidrug and toxin extrusion protein 2 (602 aa).

At 1–33 (MDSLQDTVALDHGGCCPALSRLVPRGFGTEMWT) the chain is on the cytoplasmic side. The chain crosses the membrane as a helical span at residues 34-54 (LFALSGPLFLFQVLTFMIYIV). Residues 55–66 (STVFCGHLGKVE) are Extracellular-facing. Residues 67 to 87 (LASVTLAVAFVNVCGVSVGVG) form a helical membrane-spanning segment. At 88-119 (LSSACDTLMSQSFGSPNKKHVGVILQRGALVL) the chain is on the cytoplasmic side. Residues 120–140 (LLCCLPCWALFLNTQHILLLF) form a helical membrane-spanning segment. Topologically, residues 141 to 153 (RQDPDVSRLTQDY) are extracellular. A helical transmembrane segment spans residues 154-174 (VMIFIPGLPVIFLYNLLAKYL). Topologically, residues 175-219 (QNQGWLKGQEEESPFQTPGLSILHPSHSHLSRASFHLFQKITWPQ) are cytoplasmic. A helical transmembrane segment spans residues 220–240 (VLSGVVGNCVNGVANYALVSV). At 241–248 (LNLGVRGS) the chain is on the extracellular side. The helical transmembrane segment at 249-269 (AYANIISQFAQTVFLLLYIVL) threads the bilayer. Residues 270–289 (KKLHLETWAGWSSQCLQDWG) lie on the Cytoplasmic side of the membrane. A helical membrane pass occupies residues 290 to 309 (PFFSLAVPSMLMICVEWWAY). Residues 310–327 (EIGSFLMGLLSVVDLSAQ) lie on the Extracellular side of the membrane. A helical transmembrane segment spans residues 328–348 (AVIYEVATVTYMIPLGLSIGV). Topologically, residues 349-368 (CVRVGMALGAADTVQAKRSA) are cytoplasmic. The helical transmembrane segment at 369–389 (VSGVLSIVGISLVLGTLISIL) threads the bilayer. Residues 390-402 (KNQLGHIFTNDED) are Extracellular-facing. The chain crosses the membrane as a helical span at residues 403–423 (VIALVSQVLPVYSVFHVFEAI). The Cytoplasmic portion of the chain corresponds to 424–442 (CCVYGGVLRGTGKQAFGAA). Residues 443-463 (VNAITYYIIGLPLGILLTFVV) traverse the membrane as a helical segment. Residues 464 to 466 (RMR) lie on the Extracellular side of the membrane. A helical membrane pass occupies residues 467–487 (IMGLWLGMLACVFLATAAFVA). The Cytoplasmic portion of the chain corresponds to 488 to 578 (YTARLDWKLA…LSVKQLVIRR (91 aa)). Residues 503-529 (KHSGRQQQQRAESTATRPGPEKAVLSS) are disordered. Polar residues predominate over residues 507 to 518 (RQQQQRAESTAT). Residues 579-599 (GAALGAASATLMVGLTVRILA) form a helical membrane-spanning segment. Over 600–602 (TRH) the chain is Extracellular.

The protein belongs to the multi antimicrobial extrusion (MATE) (TC 2.A.66.1) family. As to expression, high expression in kidney. Very small expression in adrenal gland and lung. High expression in kidney. Very small expression in brain and testis. In terms of tissue distribution, ubiquitously expressed in all tissues examined except the kidney.

It is found in the cell membrane. It localises to the apical cell membrane. It carries out the reaction thiamine(out) + H(+)(in) = thiamine(in) + H(+)(out). The catalysed reaction is estrone 3-sulfate(in) + H(+)(out) = estrone 3-sulfate(out) + H(+)(in). The enzyme catalyses creatinine(in) + H(+)(out) = creatinine(out) + H(+)(in). Functionally, multidrug efflux pump that functions as a H(+)/organic cation antiporter. Mediates the efflux of cationic compounds, such as the model cations, tetraethylammonium (TEA) and 1-methyl-4-phenylpyridinium (MPP+), the platinum-based drug oxaliplatin or weak bases that are positively charged at physiological pH, cimetidine, the platinum-based drugs cisplatin and oxaliplatin or the antidiabetic drug metformin. Mediates the efflux of endogenous compounds such as, creatinine, thiamine and estrone-3-sulfate. Plays a physiological role in the excretion of drugs, toxins and endogenous metabolites through the kidney. Non-functional protein. This chain is Multidrug and toxin extrusion protein 2, found in Homo sapiens (Human).